Reading from the N-terminus, the 972-residue chain is DNA cross-link repair 1A protein (972 aa).

Residues 14–80 form a disordered region; it reads YKSIRKRKPQ…SEDLDPCKDD (67 aa). Polar residues predominate over residues 23–37; it reads QSNPDSTSVSMQTVT. Positions 39–54 are enriched in basic residues; it reads GKCRPKRKGSGNRKKS. The segment covering 64-80 has biased composition (basic and acidic residues); sequence SEQRLRPSEDLDPCKDD. The UBZ4-type zinc-finger motif lies at 105 to 135; sequence DGYCPSCQMPFSLLVVQTPRWHVAECLDTPG. Zn(2+) is bound by residues C108, C111, H126, and C130. 2 disordered regions span residues 191 to 219 and 552 to 623; these read KSSC…NNEC and GEAC…TTDE. A compositionally biased stretch (polar residues) spans 210-219; it reads NLKNVPNNEC.

The protein belongs to the DNA repair metallo-beta-lactamase (DRMBL) family. As to quaternary structure, binds PIAS1.

The protein localises to the nucleus. It catalyses the reaction a beta-lactam + H2O = a substituted beta-amino acid. In terms of biological role, may be required for DNA interstrand cross-link repair. This is DNA cross-link repair 1A protein (DCLRE1A) from Gallus gallus (Chicken).